Here is a 188-residue protein sequence, read N- to C-terminus: Large ribosomal subunit protein eL18 (188 aa).

Residues 151–188 (HFGPAPGVPHSHTKPLVRSKGRKFERARGRRKSCGYKK) are disordered. Composition is skewed to basic residues over residues 161-171 (SHTKPLVRSKG) and 178-188 (RGRRKSCGYKK).

It belongs to the eukaryotic ribosomal protein eL18 family.

The protein localises to the cytoplasm. The polypeptide is Large ribosomal subunit protein eL18 (RpL18) (Lysiphlebus testaceipes (Greenbugs aphid parastoid)).